The sequence spans 370 residues: Chloromuconate cycloisomerase (370 aa).

K165 (proton acceptor) is an active-site residue. Mn(2+)-binding residues include D194, E220, and D245. Catalysis depends on E323, which acts as the Proton donor.

The protein belongs to the mandelate racemase/muconate lactonizing enzyme family. The cofactor is Mn(2+).

It catalyses the reaction 2-[(2R)-2-chloro-2,5-dihydro-5-oxofuryl]acetate = 3-chloro-cis,cis-muconate + H(+). It functions in the pathway aromatic compound metabolism; 3-chlorocatechol degradation. Functionally, highly active toward chlorinated substrates but retains diminished activity toward the non-chlorinated substrates. The protein is Chloromuconate cycloisomerase (clcB) of Pseudomonas putida (Arthrobacter siderocapsulatus).